The chain runs to 441 residues: uncharacterized protein (441 aa).

Transmembrane regions (helical) follow at residues 62–82 (FLSL…FEIG), 88–108 (LILT…KLFG), 112–132 (IALT…IIAL), 154–174 (ALLH…LLVV), 192–212 (WMFF…YLLY), 224–244 (ALMI…GVAS), 247–267 (ANLS…YMVC), 312–332 (IVLF…ATFA), 335–355 (ISVM…IIFL), 363–383 (QGMW…NLLL), and 399–419 (ILCS…LLYA).

The protein resides in the membrane. This is an uncharacterized protein from Schizosaccharomyces pombe (strain 972 / ATCC 24843) (Fission yeast).